We begin with the raw amino-acid sequence, 62 residues long: Large ribosomal subunit protein eL37 (62 aa).

4 residues coordinate Zn(2+): Cys-20, Cys-23, Cys-35, and Cys-38. Residues 20–38 form a C4-type zinc finger; it reads CRRCGRHAFNVAKGYCAAC.

Belongs to the eukaryotic ribosomal protein eL37 family. Requires Zn(2+) as cofactor.

Its function is as follows. Binds to the 23S rRNA. The chain is Large ribosomal subunit protein eL37 from Staphylothermus marinus (strain ATCC 43588 / DSM 3639 / JCM 9404 / F1).